Reading from the N-terminus, the 195-residue chain is Probable GTP-binding protein EngB (195 aa).

One can recognise an EngB-type G domain in the interval 24 to 195; the sequence is ELPEIALAGR…EAWDAILEKL (172 aa). Residues 32 to 39, 59 to 63, 77 to 80, 144 to 147, and 176 to 178 contribute to the GTP site; these read GRSNVGKS, GKTQL, DVPG, TKAD, and FSS. The Mg(2+) site is built by Ser-39 and Thr-61.

The protein belongs to the TRAFAC class TrmE-Era-EngA-EngB-Septin-like GTPase superfamily. EngB GTPase family. The cofactor is Mg(2+).

Its function is as follows. Necessary for normal cell division and for the maintenance of normal septation. This is Probable GTP-binding protein EngB from Streptococcus pneumoniae (strain JJA).